The sequence spans 666 residues: Frizzled-3 (666 aa).

The signal sequence occupies residues 1-22 (MAVSWIVFDLWLLTVFLGQIGG). An FZ domain is found at 23–136 (HSLFSCEPIT…CSRFPDCDEP (114 aa)). At 23–205 (HSLFSCEPIT…REELSFARYF (183 aa)) the chain is on the extracellular side. 5 cysteine pairs are disulfide-bonded: cysteine 28-cysteine 89, cysteine 36-cysteine 82, cysteine 73-cysteine 110, cysteine 99-cysteine 133, and cysteine 103-cysteine 127. A glycan (N-linked (GlcNAc...) asparagine) is linked at asparagine 42. Residues 206–226 (IGLISIICLSATLFTFLTFLI) form a helical membrane-spanning segment. The Cytoplasmic portion of the chain corresponds to 227-237 (DVTRFRYPERP). A helical membrane pass occupies residues 238–258 (IIFYAVCYMMVSLIFFIGFLL). Residues 259 to 288 (EDRVACNASSPAQYKASTVTQGSHNKACTM) lie on the Extracellular side of the membrane. An N-linked (GlcNAc...) asparagine glycan is attached at asparagine 265. Residues 289 to 309 (LFMVLYFFTMAGSVWWVILTI) form a helical membrane-spanning segment. Residues 310-328 (TWFLAAVPKWGSEAIEKKA) lie on the Cytoplasmic side of the membrane. The helical transmembrane segment at 329–349 (LLFHASAWGIPGTLTIILLAM) threads the bilayer. Over 350–374 (NKIEGDNISGVCFVGLYDVDALRYF) the chain is Extracellular. Asparagine 356 is a glycosylation site (N-linked (GlcNAc...) asparagine). The helical transmembrane segment at 375-395 (VLAPLCLYVVVGVSLLLAGII) threads the bilayer. Residues 396-420 (SLNRVRIEIPLEKENQDKLVKFMIR) lie on the Cytoplasmic side of the membrane. A helical transmembrane segment spans residues 421 to 441 (IGVFSILYLVPLLVVIGCYFY). The Extracellular portion of the chain corresponds to 442–477 (EQAYRGIWETTWIQERCREYHIPCPYQVTQMSRPDL). Residues 478–498 (ILFLMKYLMALIVGIPSIFWV) traverse the membrane as a helical segment. The Cytoplasmic portion of the chain corresponds to 499 to 666 (GSKKTCFEWA…RVIEEDGTSA (168 aa)). The short motif at 502–507 (KTCFEW) is the Lys-Thr-X-X-X-Trp motif, mediates interaction with the PDZ domain of Dvl family members element. Residues 538–666 (RDPNTPIIRK…RVIEEDGTSA (129 aa)) form a disordered region. Residues 550 to 565 (GTSTQGTSTHASSTQL) are compositionally biased toward polar residues. Basic and acidic residues predominate over residues 617 to 638 (LTDHSRHSSSHRLNEQSRHSSI). Residues 639-656 (RDLSNNPMTHITHGTSMN) are compositionally biased toward polar residues.

It belongs to the G-protein coupled receptor Fz/Smo family. In terms of assembly, interacts with VANGL2. In terms of processing, ubiquitinated by ZNRF3, leading to its degradation by the proteasome. Expressed in the cortex, diencephalon, rostral brainstem and little or no staining is seen in the striatum or cerebellum. Expressed in both hair cells and supporting cells in the utricle, saccule, cristae and the organ of Corti in the inner ear (at protein level). Highly expressed in the CNS. In skin, it is restricted to the epidermis and to the developing hair follicle.

Its subcellular location is the membrane. The protein resides in the cell membrane. The protein localises to the cell surface. It localises to the apical cell membrane. Its function is as follows. Receptor for Wnt proteins. Most of frizzled receptors are coupled to the beta-catenin canonical signaling pathway, which leads to the activation of disheveled proteins, inhibition of GSK-3 kinase, nuclear accumulation of beta-catenin and activation of Wnt target genes. A second signaling pathway involving PKC and calcium fluxes has been seen for some family members, but it is not yet clear if it represents a distinct pathway or if it can be integrated in the canonical pathway, as PKC seems to be required for Wnt-mediated inactivation of GSK-3 kinase. Both pathways seem to involve interactions with G-proteins. Activation by Wnt5A stimulates PKC activity via a G-protein-dependent mechanism. Involved in transduction and intercellular transmission of polarity information during tissue morphogenesis and/or in differentiated tissues. Plays a role in controlling early axon growth and guidance processes necessary for the formation of a subset of central and peripheral major fiber tracts. Required for the development of major fiber tracts in the central nervous system, including: the anterior commissure, the corpus callosum, the thalamocortical, corticothalamic and nigrostriatal tracts, the corticospinal tract, the fasciculus retroflexus, the mammillothalamic tract, the medial lemniscus, and ascending fiber tracts from the spinal cord to the brain. In the peripheral nervous system, controls axon growth in distinct populations of cranial and spinal motor neurons, including the facial branchimotor nerve, the hypoglossal nerve, the phrenic nerve, and motor nerves innervating dorsal limbs. Involved in the migration of cranial neural crest cells. May also be implicated in the transmission of sensory information from the trunk and limbs to the brain. Controls commissural sensory axons guidance after midline crossing along the anterior-posterior axis in the developing spinal cord in a Wnt-dependent signaling pathway. Together with FZD6, is involved in the neural tube closure and plays a role in the regulation of the establishment of planar cell polarity (PCP), particularly in the orientation of asymmetric bundles of stereocilia on the apical faces of a subset of auditory and vestibular sensory cells located in the inner ear. Promotes neurogenesis by maintaining sympathetic neuroblasts within the cell cycle in a beta-catenin-dependent manner. This chain is Frizzled-3 (Fzd3), found in Mus musculus (Mouse).